Here is a 104-residue protein sequence, read N- to C-terminus: L-rhamnose mutarotase (104 aa).

Substrate is bound at residue Y18. Catalysis depends on H22, which acts as the Proton donor. Substrate-binding positions include Y41 and 76–77 (WW).

This sequence belongs to the rhamnose mutarotase family. In terms of assembly, homodimer.

It is found in the cytoplasm. The catalysed reaction is alpha-L-rhamnose = beta-L-rhamnose. It participates in carbohydrate metabolism; L-rhamnose metabolism. Its function is as follows. Involved in the anomeric conversion of L-rhamnose. This Salmonella agona (strain SL483) protein is L-rhamnose mutarotase.